A 975-amino-acid polypeptide reads, in one-letter code: Translation initiation factor IF-2 (975 aa).

Disordered stretches follow at residues 49–110 and 193–339; these read KLSG…APKA and AAAP…GRGA. The segment covering 63–72 has biased composition (basic residues); sequence KKTAARKAAP. 3 stretches are compositionally biased toward low complexity: residues 73-94, 193-202, and 209-225; these read KKAA…AKTP, AAAPEAPAPQ, and VVGT…ASAP. Residues 308-318 show a composition bias toward basic and acidic residues; that stretch reads GADRGGRDFDK. The span at 324-336 shows a compositional bias: low complexity; sequence GPSAPAAGPAAAG. The tr-type G domain occupies 469-639; sequence TRPPVVTVMG…KLVAEVAELK (171 aa). Residues 478–485 form a G1 region; the sequence is GHVDHGKT. 478–485 provides a ligand contact to GTP; it reads GHVDHGKT. Residues 503–507 form a G2 region; sequence GITQH. Positions 525–528 are G3; the sequence is DTPG. Residues 525-529 and 579-582 each bind GTP; these read DTPGH and NKID. The G4 stretch occupies residues 579-582; the sequence is NKID. Residues 615-617 are G5; that stretch reads SAL.

The protein belongs to the TRAFAC class translation factor GTPase superfamily. Classic translation factor GTPase family. IF-2 subfamily.

It is found in the cytoplasm. Functionally, one of the essential components for the initiation of protein synthesis. Protects formylmethionyl-tRNA from spontaneous hydrolysis and promotes its binding to the 30S ribosomal subunits. Also involved in the hydrolysis of GTP during the formation of the 70S ribosomal complex. This Bdellovibrio bacteriovorus (strain ATCC 15356 / DSM 50701 / NCIMB 9529 / HD100) protein is Translation initiation factor IF-2.